We begin with the raw amino-acid sequence, 304 residues long: Porphobilinogen deaminase (304 aa).

C240 bears the S-(dipyrrolylmethanemethyl)cysteine mark.

This sequence belongs to the HMBS family. In terms of assembly, monomer. It depends on dipyrromethane as a cofactor.

The enzyme catalyses 4 porphobilinogen + H2O = hydroxymethylbilane + 4 NH4(+). It participates in porphyrin-containing compound metabolism; protoporphyrin-IX biosynthesis; coproporphyrinogen-III from 5-aminolevulinate: step 2/4. Its function is as follows. Tetrapolymerization of the monopyrrole PBG into the hydroxymethylbilane pre-uroporphyrinogen in several discrete steps. In Xanthomonas campestris pv. campestris (strain ATCC 33913 / DSM 3586 / NCPPB 528 / LMG 568 / P 25), this protein is Porphobilinogen deaminase.